A 90-amino-acid chain; its full sequence is Small ribosomal subunit protein bS20 (90 aa).

Positions 1–11 are enriched in basic residues; sequence MAHHKSAKKRI. Residues 1-22 are disordered; that stretch reads MAHHKSAKKRIRQTERRTEVNR. Residues 12-22 show a composition bias toward basic and acidic residues; the sequence is RQTERRTEVNR.

The protein belongs to the bacterial ribosomal protein bS20 family.

Its function is as follows. Binds directly to 16S ribosomal RNA. The sequence is that of Small ribosomal subunit protein bS20 from Paramagnetospirillum magneticum (strain ATCC 700264 / AMB-1) (Magnetospirillum magneticum).